The chain runs to 315 residues: MNPNFLDFEQPIADLQAKIEELRLVGNDNSLNIGDEISRLQDKSKTLTESIFGNLTSWQIARMARHPRRPYTLDYIENIFTEFDELHGDRHFSDDAAIVGGIARLDNQPVMVIGHQKGREVREKVRRNFGMPRPEGYRKACRLMEMAERFKMPILTFIDTPGAYPGIDAEERNQSEAIAWNLRVMARLKTPIIATVIGEGGSGGALAIGVCDQLNMLQYSTYAVISPEGCASILWKTAEKAPDAAEAMGITADRLKGLGIVDKVIAEPLGGAHRDPVAAAALIREELSSQLAMLKEFDNDELLARRYDRLMSYGL.

The CoA carboxyltransferase C-terminal domain maps to 40 to 293; it reads LQDKSKTLTE…REELSSQLAM (254 aa).

The protein belongs to the AccA family. In terms of assembly, acetyl-CoA carboxylase is a heterohexamer composed of biotin carboxyl carrier protein (AccB), biotin carboxylase (AccC) and two subunits each of ACCase subunit alpha (AccA) and ACCase subunit beta (AccD).

The protein localises to the cytoplasm. The enzyme catalyses N(6)-carboxybiotinyl-L-lysyl-[protein] + acetyl-CoA = N(6)-biotinyl-L-lysyl-[protein] + malonyl-CoA. The protein operates within lipid metabolism; malonyl-CoA biosynthesis; malonyl-CoA from acetyl-CoA: step 1/1. In terms of biological role, component of the acetyl coenzyme A carboxylase (ACC) complex. First, biotin carboxylase catalyzes the carboxylation of biotin on its carrier protein (BCCP) and then the CO(2) group is transferred by the carboxyltransferase to acetyl-CoA to form malonyl-CoA. The sequence is that of Acetyl-coenzyme A carboxylase carboxyl transferase subunit alpha from Pseudomonas syringae pv. syringae (strain B728a).